Consider the following 269-residue polypeptide: GATA zinc finger domain-containing protein 1 (269 aa).

The segment at 9-33 (CSVCKTTSSSMWKKGAQGEILCHHC) adopts a GATA-type zinc-finger fold. Positions 63–115 (ATFASTSATPPQSNGGGGGKQSKQEIHRRSARLRNTKYKSAPAAEKKVSTKGK) are disordered. K262 participates in a covalent cross-link: Glycyl lysine isopeptide (Lys-Gly) (interchain with G-Cter in SUMO2).

Component of a chromatin complex, at least composed of KDM5A, GATAD1 and EMSY. Ubiquitously expressed among various tissue types. Expressed in left ventricular myocytes.

Its subcellular location is the nucleus. In terms of biological role, component of some chromatin complex recruited to chromatin sites methylated 'Lys-4' of histone H3 (H3K4me), with a preference for trimethylated form (H3K4me3). This chain is GATA zinc finger domain-containing protein 1 (GATAD1), found in Homo sapiens (Human).